The chain runs to 106 residues: Putative protein LRRC37A5P (106 aa).

The polypeptide is Putative protein LRRC37A5P (LRRC37A5P) (Homo sapiens (Human)).